The primary structure comprises 471 residues: MDTIIEPFRIKSVEPIQLTSRAERERMIRDAHYNLFNLHADDVIIDLLTDSGTSAMSAAQWAGLMQGDESYAGSPSYFRFEEAVKDLMPFEHVIPTHQGRAAERILMGIVAGPDAKIPSNTHFDTTRANIEATGAEAVDLVIDAGHVPDAEHPFKGNINLDRLEALLDAEGDRVPIVMLTVTNNTGGGQPVSLANIRGAKALCDTYDVPLVLDACRFAENAYFIKQREDGYGDRSVKEIVREMFSHADGMTMSAKKDALVNIGGWLALDDDAWARKARNQLILTEGFPTYGGLAGRDLEAIAVGLQEIVDEDYLEYRMASTRYLGEALTELGVPIVKPVGGHAVYIDAKSLLPHIPPLDYPAQSLAVALYVTGGIRGVEIGSVMFGRQPDGSEEPADQELLRLAIPRRVYTQSHVDYVIECFEALVGRKGALCGYEITEEPPQLRHFTAHLRPKAPEAVHHETDGPVEASS.

Lysine 256 carries the post-translational modification N6-(pyridoxal phosphate)lysine.

Belongs to the beta-eliminating lyase family. Homotetramer. It depends on pyridoxal 5'-phosphate as a cofactor.

The enzyme catalyses L-tryptophan + H2O = indole + pyruvate + NH4(+). Its pathway is amino-acid degradation; L-tryptophan degradation via pyruvate pathway; indole and pyruvate from L-tryptophan: step 1/1. The polypeptide is Tryptophanase (Salinibacter ruber (strain DSM 13855 / M31)).